The primary structure comprises 560 residues: Diphtheria toxin homolog CRM228 (560 aa).

Positions 1–25 are cleaved as a signal peptide; sequence MSRKLFASILIGALLGIGAPPSAHA. Residues H46 and Y90 each coordinate NAD(+). E173 is an active-site residue. 2 cysteine pairs are disulfide-bonded: C211/C226 and C486/C496.

The polypeptide is Diphtheria toxin homolog CRM228 (Corynebacterium diphtheriae).